The chain runs to 82 residues: RNA-binding protein YbxF (82 aa).

The protein belongs to the eukaryotic ribosomal protein eL8 family.

In Geobacillus stearothermophilus (Bacillus stearothermophilus), this protein is RNA-binding protein YbxF.